Here is a 126-residue protein sequence, read N- to C-terminus: Large ribosomal subunit protein uL22 (126 aa).

It belongs to the universal ribosomal protein uL22 family. Part of the 50S ribosomal subunit.

This protein binds specifically to 23S rRNA; its binding is stimulated by other ribosomal proteins, e.g. L4, L17, and L20. It is important during the early stages of 50S assembly. It makes multiple contacts with different domains of the 23S rRNA in the assembled 50S subunit and ribosome. In terms of biological role, the globular domain of the protein is located near the polypeptide exit tunnel on the outside of the subunit, while an extended beta-hairpin is found that lines the wall of the exit tunnel in the center of the 70S ribosome. This Maricaulis maris (strain MCS10) (Caulobacter maris) protein is Large ribosomal subunit protein uL22.